A 477-amino-acid polypeptide reads, in one-letter code: Protoporphyrinogen oxidase (477 aa).

FAD-binding positions include 9 to 14 (GGGISG), tryptophan 42, 57 to 60 (GPRG), valine 257, alanine 449, and 454 to 456 (VAV).

The protein belongs to the protoporphyrinogen/coproporphyrinogen oxidase family. Protoporphyrinogen oxidase subfamily. In terms of assembly, monomer. Homodimer. Requires FAD as cofactor. In terms of tissue distribution, detected in liver (at protein level).

It localises to the mitochondrion inner membrane. The enzyme catalyses protoporphyrinogen IX + 3 O2 = protoporphyrin IX + 3 H2O2. It functions in the pathway porphyrin-containing compound metabolism; protoporphyrin-IX biosynthesis; protoporphyrin-IX from protoporphyrinogen-IX: step 1/1. Its function is as follows. Catalyzes the 6-electron oxidation of protoporphyrinogen-IX to form protoporphyrin-IX. This is Protoporphyrinogen oxidase (PPOX) from Bos taurus (Bovine).